We begin with the raw amino-acid sequence, 171 residues long: Homeobox protein engrailed-1-B (171 aa).

Disordered stretches follow at residues 1-41 (EDPG…NAAP) and 60-86 (YSDR…KRPR). Over residues 15-29 (PDSDTPSDSSKGSDS) the composition is skewed to low complexity. Residues 82-141 (DKRPRTAFTAEQLQRLKAEFQANRYITEQRRQTLAQELSLNESQIKIWFQNKRAKIKKAS) constitute a DNA-binding region (homeobox).

Belongs to the engrailed homeobox family.

The protein resides in the nucleus. Its function is as follows. Required for proper formation of the apical ectodermal ridge and correct dorsal-ventral patterning in the limb. The sequence is that of Homeobox protein engrailed-1-B (en1-b) from Xenopus laevis (African clawed frog).